We begin with the raw amino-acid sequence, 273 residues long: MPTKKWEDEESSSGSSDESSPAVAVSVPRRKFDDEEANDSDVLDSWDAAEDSEVEREKAKKAAEAKAKAEAEAKANKKTKAARINEHKQRRKEAEESDESDDETESQRRERLRRTEKEADLAHAEDLFGDIGVPAGRKVKAASTSVSIDPSDPSKTVELSDMPIFNPKTKTQFEDMRQALIPLITASSGRKPHYNNFMEEFVRQLCADMPSENIKKISSKLTALSNEKMKQEKAAAGTKKTKAAKTKTSLVANRAGVTDTNSYEDTFGDDDFM.

The tract at residues 1–158 is disordered; sequence MPTKKWEDEE…DPSDPSKTVE (158 aa). The segment covering 34 to 54 has biased composition (acidic residues); that stretch reads DEEANDSDVLDSWDAAEDSEV. Positions 50–97 form a coiled coil; that stretch reads EDSEVEREKAKKAAEAKAKAEAEAKANKKTKAARINEHKQRRKEAEES. Residues 55–75 show a composition bias toward basic and acidic residues; the sequence is EREKAKKAAEAKAKAEAEAKA. Acidic residues predominate over residues 95-104; that stretch reads EESDESDDET. Residues 105–126 show a composition bias toward basic and acidic residues; sequence ESQRRERLRRTEKEADLAHAED.

This sequence belongs to the eIF-3 subunit J family. Component of the eukaryotic translation initiation factor 3 (eIF-3) complex.

It localises to the cytoplasm. Its function is as follows. Component of the eukaryotic translation initiation factor 3 (eIF-3) complex, which is involved in protein synthesis of a specialized repertoire of mRNAs and, together with other initiation factors, stimulates binding of mRNA and methionyl-tRNAi to the 40S ribosome. The eIF-3 complex specifically targets and initiates translation of a subset of mRNAs involved in cell proliferation. In Pyricularia oryzae (strain 70-15 / ATCC MYA-4617 / FGSC 8958) (Rice blast fungus), this protein is Eukaryotic translation initiation factor 3 subunit J.